A 186-amino-acid chain; its full sequence is ATP synthase subunit delta (186 aa).

Belongs to the ATPase delta chain family. As to quaternary structure, F-type ATPases have 2 components, F(1) - the catalytic core - and F(0) - the membrane proton channel. F(1) has five subunits: alpha(3), beta(3), gamma(1), delta(1), epsilon(1). F(0) has three main subunits: a(1), b(2) and c(10-14). The alpha and beta chains form an alternating ring which encloses part of the gamma chain. F(1) is attached to F(0) by a central stalk formed by the gamma and epsilon chains, while a peripheral stalk is formed by the delta and b chains.

The protein resides in the cell inner membrane. Its function is as follows. F(1)F(0) ATP synthase produces ATP from ADP in the presence of a proton or sodium gradient. F-type ATPases consist of two structural domains, F(1) containing the extramembraneous catalytic core and F(0) containing the membrane proton channel, linked together by a central stalk and a peripheral stalk. During catalysis, ATP synthesis in the catalytic domain of F(1) is coupled via a rotary mechanism of the central stalk subunits to proton translocation. This protein is part of the stalk that links CF(0) to CF(1). It either transmits conformational changes from CF(0) to CF(1) or is implicated in proton conduction. The chain is ATP synthase subunit delta from Nitrobacter hamburgensis (strain DSM 10229 / NCIMB 13809 / X14).